We begin with the raw amino-acid sequence, 716 residues long: DNA ligase (716 aa).

NAD(+) contacts are provided by residues 49-53 (DAEYD), 98-99 (SL), and Glu-131. The N6-AMP-lysine intermediate role is filled by Lys-133. NAD(+) contacts are provided by Arg-154, Glu-191, Lys-308, and Lys-332. 4 residues coordinate Zn(2+): Cys-437, Cys-439, Cys-461, and Cys-467. Residues 638 to 716 (KRHSPIATKT…EDEWLQLIAE (79 aa)) enclose the BRCT domain.

This sequence belongs to the NAD-dependent DNA ligase family. LigA subfamily. It depends on Mg(2+) as a cofactor. The cofactor is Mn(2+).

The catalysed reaction is NAD(+) + (deoxyribonucleotide)n-3'-hydroxyl + 5'-phospho-(deoxyribonucleotide)m = (deoxyribonucleotide)n+m + AMP + beta-nicotinamide D-nucleotide.. Functionally, DNA ligase that catalyzes the formation of phosphodiester linkages between 5'-phosphoryl and 3'-hydroxyl groups in double-stranded DNA using NAD as a coenzyme and as the energy source for the reaction. It is essential for DNA replication and repair of damaged DNA. In Bradyrhizobium sp. (strain BTAi1 / ATCC BAA-1182), this protein is DNA ligase.